A 409-amino-acid polypeptide reads, in one-letter code: NADH-quinone oxidoreductase subunit D (409 aa).

This sequence belongs to the complex I 49 kDa subunit family. In terms of assembly, NDH-1 is composed of 14 different subunits. Subunits NuoB, C, D, E, F, and G constitute the peripheral sector of the complex.

It localises to the cell inner membrane. It catalyses the reaction a quinone + NADH + 5 H(+)(in) = a quinol + NAD(+) + 4 H(+)(out). Functionally, NDH-1 shuttles electrons from NADH, via FMN and iron-sulfur (Fe-S) centers, to quinones in the respiratory chain. The immediate electron acceptor for the enzyme in this species is believed to be ubiquinone. Couples the redox reaction to proton translocation (for every two electrons transferred, four hydrogen ions are translocated across the cytoplasmic membrane), and thus conserves the redox energy in a proton gradient. The polypeptide is NADH-quinone oxidoreductase subunit D (Campylobacter concisus (strain 13826)).